The sequence spans 152 residues: Transcriptional regulator MraZ (152 aa).

SpoVT-AbrB domains are found at residues 5–52 (ATLV…PLPE) and 81–124 (ASEC…DETT).

Belongs to the MraZ family. Dodecamer.

Its subcellular location is the cytoplasm. The protein localises to the nucleoid. Its function is as follows. Negatively regulates its own expression and that of the subsequent genes in the proximal part of the division and cell wall (dcw) gene cluster. Acts by binding directly to DNA. May also regulate the expression of genes outside the dcw cluster. The chain is Transcriptional regulator MraZ from Escherichia coli (strain K12).